The following is a 127-amino-acid chain: Large ribosomal subunit protein bL17 (127 aa).

This sequence belongs to the bacterial ribosomal protein bL17 family. In terms of assembly, part of the 50S ribosomal subunit. Contacts protein L32.

The protein is Large ribosomal subunit protein bL17 of Xanthomonas campestris pv. campestris (strain 8004).